The sequence spans 1897 residues: 1,3-beta-glucan synthase component FKS1 (1897 aa).

The interval M1 to R106 is disordered. The segment covering H8 to G29 has biased composition (basic and acidic residues). A compositionally biased stretch (low complexity) spans G74–G83. Transmembrane regions (helical) follow at residues I487 to Y507, W525 to C545, L564 to F584, T591 to F611, L655 to L675, I707 to W727, Y728 to W748, N1329 to L1349, C1386 to L1406, F1473 to S1493, T1497 to F1517, I1588 to L1608, I1630 to G1650, F1666 to F1686, V1701 to L1721, F1766 to I1786, and F1826 to V1846.

It belongs to the glycosyltransferase 48 family. In terms of assembly, component of the 1,3-beta-glucan synthase (GS) complex composed of a catalytic subunit fksA and a regulatory subunit.

It is found in the mitochondrion. The protein localises to the cell membrane. The enzyme catalyses [(1-&gt;3)-beta-D-glucosyl](n) + UDP-alpha-D-glucose = [(1-&gt;3)-beta-D-glucosyl](n+1) + UDP + H(+). Its function is as follows. Catalytic subunit of the 1,3-beta-glucan synthase. Synthesizes 1,3-beta-glucan, a major structural component of the fungal cell wall. Involved in cell wall synthesis, maintenance and remodeling. In Aspergillus niger (strain ATCC MYA-4892 / CBS 513.88 / FGSC A1513), this protein is 1,3-beta-glucan synthase component FKS1.